The primary structure comprises 244 residues: Protein crossbronx (244 aa).

Residues 20-176 (QQEYKILAEY…VQENIKESKE (157 aa)) enclose the UBC core domain. The interval 209-244 (AGRSKQTEPSAQQGNGGHATGLSWVKEGEFKPLSIE) is disordered.

Belongs to the ubiquitin-conjugating enzyme family. FTS subfamily.

In Drosophila sechellia (Fruit fly), this protein is Protein crossbronx (cbx).